The chain runs to 365 residues: Ribosomal RNA large subunit methyltransferase M (365 aa).

S-adenosyl-L-methionine contacts are provided by residues Ser187, 220–223 (CPGG), Asp239, Asp259, and Asp276. The active-site Proton acceptor is Lys305.

This sequence belongs to the class I-like SAM-binding methyltransferase superfamily. RNA methyltransferase RlmE family. RlmM subfamily. Monomer.

Its subcellular location is the cytoplasm. The catalysed reaction is cytidine(2498) in 23S rRNA + S-adenosyl-L-methionine = 2'-O-methylcytidine(2498) in 23S rRNA + S-adenosyl-L-homocysteine + H(+). Catalyzes the 2'-O-methylation at nucleotide C2498 in 23S rRNA. The sequence is that of Ribosomal RNA large subunit methyltransferase M from Psychromonas ingrahamii (strain DSM 17664 / CCUG 51855 / 37).